Here is a 195-residue protein sequence, read N- to C-terminus: UPF0167 protein CbrC (195 aa).

The protein belongs to the UPF0167 family.

This chain is UPF0167 protein CbrC (cbrC), found in Escherichia coli (strain K12).